The following is a 122-amino-acid chain: MSNIESIVEKLSSLTLIEAAELSKRLEKEWGVSASAPVSVVAPVAAEAGSAASEKTEFEVVLKGFDDPKKKIAVIKEVRAITDLGLKEAKELVESAPKSLKTGLSKDEANEMKKKLEDAGAT.

Residues 96–122 form a disordered region; that stretch reads APKSLKTGLSKDEANEMKKKLEDAGAT. Basic and acidic residues predominate over residues 104-122; it reads LSKDEANEMKKKLEDAGAT.

Belongs to the bacterial ribosomal protein bL12 family. Homodimer. Part of the ribosomal stalk of the 50S ribosomal subunit. Forms a multimeric L10(L12)X complex, where L10 forms an elongated spine to which 2 to 4 L12 dimers bind in a sequential fashion. Binds GTP-bound translation factors.

Its function is as follows. Forms part of the ribosomal stalk which helps the ribosome interact with GTP-bound translation factors. Is thus essential for accurate translation. The polypeptide is Large ribosomal subunit protein bL12 (Liberibacter asiaticus (Citrus greening disease)).